The sequence spans 1355 residues: NACHT, LRR and PYD domains-containing protein 1 homolog (1355 aa).

In terms of domain architecture, NACHT spans 257 to 458; that stretch reads KTVILCGDSG…SVPLLCWMVC (202 aa). 263–270 is an ATP binding site; the sequence is GDSGRGKS. The segment at 977-1109 is ZU5; that stretch reads DSDQWVQVEP…FHAKILQPMF (133 aa). In terms of domain architecture, FIIND spans 977–1252; sequence DSDQWVQVEP…NKTESDLFQS (276 aa). The UPA stretch occupies residues 1110 to 1252; it reads SPKTVLVKLG…NKTESDLFQS (143 aa). Positions 1278–1354 constitute a CARD domain; it reads LIKSVENVDT…NLLNHLPSSD (77 aa).

It belongs to the NLRP family. In terms of assembly, interacts with the C-terminal part of nlrp1 (NACHT, LRR and PYD domains-containing protein 1, C-terminus) in absence of pathogens and other damage-associated signals. As to quaternary structure, interacts with the N-terminal part of nlrp1 (NACHT, LRR and PYD domains-containing protein 1, N-terminus) in absence of pathogens and other damage-associated signals. Homomultimer; forms the nlrp1 inflammasome polymeric complex, a filament composed of homopolymers of this form in response to pathogens and other damage-associated signals. The nlrp1 inflammasome polymeric complex associates with pycard/asc. Interacts (via CARD domain) with pycard/asc (via CARD domain); leading to pro-inflammatory caspases (caspa and/or caspb) recruitment. Pro-caspase-a and pro-caspase-b filament formation increases local enzyme concentration, resulting in trans-autocleavage and activation. Active caspa and caspb then processes il1b and il18 precursors, leading to the release of mature cytokines in the extracellular milieu and inflammatory response. In terms of processing, autocatalytically cleaved. Autocatalytic cleavage in FIIND region occurs constitutively, prior to activation signals, and is required for inflammasome activity (IL1B release), possibly by facilitating pro-inflammatory caspases (caspa and/or caspb) binding. Both N- and C-terminal parts remain associated non-covalently. Ubiquitinated in response to pathogen-associated signals, leading to its degradation by the proteasome and subsequent release of the cleaved C-terminal part of the protein (NACHT, LRR and PYD domains-containing protein 1, C-terminus), which polymerizes and forms the nlrp1 inflammasome. Expressed in adult spleen, head kidney, gill and skin and also in the embryo.

The protein localises to the cytoplasm. It localises to the inflammasome. Nlrp1 inflammasome is activated by pathogens and other damage-associated signals: activation promotes ubiquitination and degradation of the N-terminal part, releasing the cleaved C-terminal part of the protein (NACHT, LRR and PYD domains-containing protein 1, C-terminus), which polymerizes and forms the nlrp1 inflammasome. Functionally, acts as the sensor component of the nlrp1 inflammasome, which mediates inflammasome activation in response to various pathogen-associated signals, leading to subsequent pyroptosis. Inflammasomes are supramolecular complexes that assemble in the cytosol in response to pathogens and other damage-associated signals and play critical roles in innate immunity and inflammation. Acts as a recognition receptor (PRR): recognizes specific pathogens and other damage-associated signals, and mediates the formation of the inflammasome polymeric complex. In response to pathogen-associated signals, the N-terminal part of nlrp1 is degraded by the proteasome, releasing the cleaved C-terminal part of the protein (NACHT, LRR and PYD domains-containing protein 1, C-terminus), which polymerizes to initiate the formation of the inflammasome complex: the inflammasome recruits and activate pro-inflammatory caspases (caspa and/or caspb), leading to pyroptosis. Constitutes the precursor of the nlrp1 inflammasome, which mediates autoproteolytic processing within the FIIND domain to generate the N-terminal and C-terminal parts, which are associated non-covalently in absence of pathogens and other damage-associated signals. Its function is as follows. Regulatory part that prevents formation of the nlrp1 inflammasome: in absence of pathogens and other damage-associated signals, interacts with the C-terminal part of nlrp1 (NACHT, LRR and PYD domains-containing protein 1, C-terminus), preventing activation of the nlrp1 inflammasome. In response to pathogen-associated signals, this part is ubiquitinated and degraded by the proteasome, releasing the cleaved C-terminal part of the protein, which polymerizes and forms the nlrp1 inflammasome. In terms of biological role, constitutes the active part of the nlrp1 inflammasome. In absence of pathogens and other damage-associated signals, interacts with the N-terminal part of nlrp1 (NACHT, LRR and PYD domains-containing protein 1, N-terminus), preventing activation of the nlrp1 inflammasome. In response to pathogen-associated signals, the N-terminal part of nlrp1 is degraded by the proteasome, releasing this form, which polymerizes to form the nlrp1 inflammasome complex: the nlrp1 inflammasome complex then directly recruits and activates pro-inflammatory caspases (caspa and/or caspb) activation, leading to subsequent pyroptosis. The chain is NACHT, LRR and PYD domains-containing protein 1 homolog from Danio rerio (Zebrafish).